A 328-amino-acid polypeptide reads, in one-letter code: Methionyl-tRNA formyltransferase (328 aa).

110 to 113 contributes to the (6S)-5,6,7,8-tetrahydrofolate binding site; that stretch reads SLLP.

The protein belongs to the Fmt family.

It catalyses the reaction L-methionyl-tRNA(fMet) + (6R)-10-formyltetrahydrofolate = N-formyl-L-methionyl-tRNA(fMet) + (6S)-5,6,7,8-tetrahydrofolate + H(+). Functionally, attaches a formyl group to the free amino group of methionyl-tRNA(fMet). The formyl group appears to play a dual role in the initiator identity of N-formylmethionyl-tRNA by promoting its recognition by IF2 and preventing the misappropriation of this tRNA by the elongation apparatus. The sequence is that of Methionyl-tRNA formyltransferase from Prochlorococcus marinus (strain MIT 9515).